A 188-amino-acid chain; its full sequence is MDVNLAPLRAWDDFFPGSDRFARPDFRDISKWNNRVVSNLLYYQTNYLVVAAMMISVVGFLSPFNMILGGIIVVLVFTGFVWAAHNKDILRRMKKQYPTAFVMVVMLASYFLISMFGGVMVFVFGITFPLLLMFIHASLRLRNLKNKLENKMEGIGLKKTPMGIILDALEQQEDSINKFADYISKARE.

Met1 bears the N-acetylmethionine mark. At 1 to 35 the chain is on the cytoplasmic side; the sequence is MDVNLAPLRAWDDFFPGSDRFARPDFRDISKWNNR. 2 consecutive transmembrane segments (helical) span residues 36 to 56 and 57 to 77; these read VVSN…MMIS and VVGF…VLVF. At 78-92 the chain is on the cytoplasmic side; the sequence is TGFVWAAHNKDILRR. The next 2 membrane-spanning stretches (helical) occupy residues 93 to 113 and 115 to 135; these read MKKQ…YFLI and MFGG…LMFI. The segment at 103 to 117 is required for homodimer formation and heterodimer formation with ARL6IP1; that stretch reads MVVMLASYFLISMFG. The Cytoplasmic portion of the chain corresponds to 136–188; it reads HASLRLRNLKNKLENKMEGIGLKKTPMGIILDALEQQEDSINKFADYISKARE. The tract at residues 136–188 is targeting to endoplasmic reticulum membrane; that stretch reads HASLRLRNLKNKLENKMEGIGLKKTPMGIILDALEQQEDSINKFADYISKARE.

It belongs to the PRA1 family. As to quaternary structure, homodimer. Heterodimer with ARL6IP1. Forms multimers. Interacts with ARL6. Interacts with prenylated RAB1A and RAB3A. Interacts with SLC1A1/EAAC1. Interacts with RTN2 (via first transmembrane domain). Does not interact with VAMP1, VAMP2 or VAMP3. As to expression, ubiquitous. Most abundant in heart and brain. In the embryonic brain cortex, expressed in neurons and astrocytes.

It localises to the endoplasmic reticulum membrane. The protein resides in the cell membrane. The protein localises to the cytoplasm. Its subcellular location is the cytoskeleton. Functionally, regulates intracellular concentrations of taurine and glutamate. Negatively modulates SLC1A1/EAAC1 glutamate transport activity by decreasing its affinity for glutamate in a PKC activity-dependent manner. Plays a role in the retention of SLC1A1/EAAC1 in the endoplasmic reticulum. The sequence is that of PRA1 family protein 3 (Arl6ip5) from Rattus norvegicus (Rat).